The chain runs to 560 residues: Dihydroxy-acid dehydratase (560 aa).

D80 contacts Mg(2+). C121 contacts [2Fe-2S] cluster. D122 and K123 together coordinate Mg(2+). The residue at position 123 (K123) is an N6-carboxylysine. [2Fe-2S] cluster is bound at residue C194. E447 contacts Mg(2+). S473 functions as the Proton acceptor in the catalytic mechanism.

This sequence belongs to the IlvD/Edd family. Homodimer. [2Fe-2S] cluster serves as cofactor. Mg(2+) is required as a cofactor.

The enzyme catalyses (2R)-2,3-dihydroxy-3-methylbutanoate = 3-methyl-2-oxobutanoate + H2O. The catalysed reaction is (2R,3R)-2,3-dihydroxy-3-methylpentanoate = (S)-3-methyl-2-oxopentanoate + H2O. The protein operates within amino-acid biosynthesis; L-isoleucine biosynthesis; L-isoleucine from 2-oxobutanoate: step 3/4. It participates in amino-acid biosynthesis; L-valine biosynthesis; L-valine from pyruvate: step 3/4. Its function is as follows. Functions in the biosynthesis of branched-chain amino acids. Catalyzes the dehydration of (2R,3R)-2,3-dihydroxy-3-methylpentanoate (2,3-dihydroxy-3-methylvalerate) into 2-oxo-3-methylpentanoate (2-oxo-3-methylvalerate) and of (2R)-2,3-dihydroxy-3-methylbutanoate (2,3-dihydroxyisovalerate) into 2-oxo-3-methylbutanoate (2-oxoisovalerate), the penultimate precursor to L-isoleucine and L-valine, respectively. The sequence is that of Dihydroxy-acid dehydratase from Chlorobaculum parvum (strain DSM 263 / NCIMB 8327) (Chlorobium vibrioforme subsp. thiosulfatophilum).